Consider the following 248-residue polypeptide: 3-deoxy-manno-octulosonate cytidylyltransferase (248 aa).

The protein belongs to the KdsB family.

Its subcellular location is the cytoplasm. It catalyses the reaction 3-deoxy-alpha-D-manno-oct-2-ulosonate + CTP = CMP-3-deoxy-beta-D-manno-octulosonate + diphosphate. Its pathway is nucleotide-sugar biosynthesis; CMP-3-deoxy-D-manno-octulosonate biosynthesis; CMP-3-deoxy-D-manno-octulosonate from 3-deoxy-D-manno-octulosonate and CTP: step 1/1. The protein operates within bacterial outer membrane biogenesis; lipopolysaccharide biosynthesis. Activates KDO (a required 8-carbon sugar) for incorporation into bacterial lipopolysaccharide in Gram-negative bacteria. The sequence is that of 3-deoxy-manno-octulosonate cytidylyltransferase from Alteromonas mediterranea (strain DSM 17117 / CIP 110805 / LMG 28347 / Deep ecotype).